The chain runs to 302 residues: Quinolinate synthase (302 aa).

Iminosuccinate-binding residues include His24 and Ser41. Cys86 is a [4Fe-4S] cluster binding site. Residues 112-114 (YVN) and Ser129 contribute to the iminosuccinate site. Cys173 provides a ligand contact to [4Fe-4S] cluster. Iminosuccinate-binding positions include 199-201 (HPE) and Thr216. Cys259 serves as a coordination point for [4Fe-4S] cluster.

The protein belongs to the quinolinate synthase family. Type 2 subfamily. Requires [4Fe-4S] cluster as cofactor.

The protein localises to the cytoplasm. The catalysed reaction is iminosuccinate + dihydroxyacetone phosphate = quinolinate + phosphate + 2 H2O + H(+). The protein operates within cofactor biosynthesis; NAD(+) biosynthesis; quinolinate from iminoaspartate: step 1/1. Catalyzes the condensation of iminoaspartate with dihydroxyacetone phosphate to form quinolinate. The protein is Quinolinate synthase of Thermococcus onnurineus (strain NA1).